The chain runs to 209 residues: Ion-translocating oxidoreductase complex subunit G (209 aa).

Residues G9 to L29 form a helical membrane-spanning segment. T175 is modified (FMN phosphoryl threonine).

This sequence belongs to the RnfG family. In terms of assembly, the complex is composed of six subunits: RnfA, RnfB, RnfC, RnfD, RnfE and RnfG. Requires FMN as cofactor.

Its subcellular location is the cell inner membrane. In terms of biological role, part of a membrane-bound complex that couples electron transfer with translocation of ions across the membrane. This Yersinia pestis protein is Ion-translocating oxidoreductase complex subunit G.